Consider the following 342-residue polypeptide: Cytosolic Fe-S cluster assembly factor NBP35 (342 aa).

Residues Cys33, Cys47, Cys50, and Cys56 each contribute to the [4Fe-4S] cluster site. 86-93 (GKGGVGKS) is an ATP binding site. Residues Cys259 and Cys262 each contribute to the [4Fe-4S] cluster site.

Belongs to the Mrp/NBP35 ATP-binding proteins family. NUBP1/NBP35 subfamily. As to quaternary structure, heterotetramer of 2 NBP35 and 2 CFD1 chains. The cofactor is [4Fe-4S] cluster.

It localises to the cytoplasm. Component of the cytosolic iron-sulfur (Fe/S) protein assembly (CIA) machinery. Required for maturation of extramitochondrial Fe-S proteins. The NBP35-CFD1 heterotetramer forms a Fe-S scaffold complex, mediating the de novo assembly of an Fe-S cluster and its transfer to target apoproteins. The polypeptide is Cytosolic Fe-S cluster assembly factor NBP35 (Gibberella zeae (strain ATCC MYA-4620 / CBS 123657 / FGSC 9075 / NRRL 31084 / PH-1) (Wheat head blight fungus)).